A 257-amino-acid chain; its full sequence is Aspartate/glutamate leucyltransferase (257 aa).

This sequence belongs to the R-transferase family. Bpt subfamily.

It localises to the cytoplasm. It carries out the reaction N-terminal L-glutamyl-[protein] + L-leucyl-tRNA(Leu) = N-terminal L-leucyl-L-glutamyl-[protein] + tRNA(Leu) + H(+). The enzyme catalyses N-terminal L-aspartyl-[protein] + L-leucyl-tRNA(Leu) = N-terminal L-leucyl-L-aspartyl-[protein] + tRNA(Leu) + H(+). Functionally, functions in the N-end rule pathway of protein degradation where it conjugates Leu from its aminoacyl-tRNA to the N-termini of proteins containing an N-terminal aspartate or glutamate. The chain is Aspartate/glutamate leucyltransferase from Sphingopyxis alaskensis (strain DSM 13593 / LMG 18877 / RB2256) (Sphingomonas alaskensis).